Reading from the N-terminus, the 318-residue chain is NF-kappa-B inhibitor alpha (318 aa).

Residues 1 to 44 (MLSAHRPAEPPAVEGCEPPRKERQGGLLPPDDRHDSGLDSMKEE) form a disordered region. Positions 17–44 (EPPRKERQGGLLPPDDRHDSGLDSMKEE) are enriched in basic and acidic residues. Residue K21 forms a Glycyl lysine isopeptide (Lys-Gly) (interchain with G-Cter in ubiquitin) linkage. S36 carries the post-translational modification Phosphoserine; by IKKA and IKKB. The residue at position 40 (S40) is a Phosphoserine; by IKKA, IKKB and IKKE. Y46 is modified (phosphotyrosine; by Tyr-kinases). 4 ANK repeats span residues 114 to 143 (LSQT…DLDV), 147 to 176 (RGNT…PHHL), 186 to 215 (NGHT…DVNA), and 220 to 249 (NGRT…DVNK).

Belongs to the NF-kappa-B inhibitor family. Post-translationally, phosphorylated at Ser-36 and Ser-40 by IKKA/CHUK and IKKB/IKBKB; disables inhibition of NF-kappa-B DNA-binding activity. Phosphorylation at positions 36 and 40 is prerequisite to polyubiquitination and subsequent degradation. Monoubiquitinated at Lys-21 following phosphorylation at Ser-36 and Ser-40. The resulting polyubiquitination leads to protein degradation. In terms of processing, hydroxylated by HIF1AN. As to expression, highly expressed in lymph node, thymus followed by liver, brain, muscle, kidney, gastrointestinal and reproductive tract.

It is found in the cytoplasm. It localises to the nucleus. Functionally, inhibits the activity of dimeric NF-kappa-B/REL complexes by trapping REL (RELA/p65 and NFKB1/p50) dimers in the cytoplasm by masking their nuclear localization signals. On cellular stimulation by immune and pro-inflammatory responses, becomes phosphorylated promoting ubiquitination and degradation, enabling the dimeric RELA to translocate to the nucleus and activate transcription. This is NF-kappa-B inhibitor alpha (NFKBIA) from Gallus gallus (Chicken).